We begin with the raw amino-acid sequence, 131 residues long: RxLR effector protein 62 (131 aa).

The signal sequence occupies residues methionine 1–serine 19. The RxLR-dEER signature appears at arginine 49 to arginine 60. N-linked (GlcNAc...) asparagine glycosylation is present at asparagine 61.

The protein belongs to the RxLR effector family.

Its subcellular location is the secreted. It localises to the host cell. Functionally, secreted effector that suppresses callose deposition, a hallmark of pathogen-associated molecular pattern (PAMP)-triggered immunity (PTI) and renders host plants more susceptible to bacterial infection. Reduces host plant responsiveness to salicylic acid (SA) in haustoriated cells into which host-translocated effectors are delivered. This chain is RxLR effector protein 62, found in Hyaloperonospora arabidopsidis (strain Emoy2) (Downy mildew agent).